The following is a 283-amino-acid chain: Phosphatidylglycerol--prolipoprotein diacylglyceryl transferase (283 aa).

The next 7 membrane-spanning stretches (helical) occupy residues L21 to A41, L60 to Y80, V95 to W115, F124 to L144, S176 to I196, G203 to V223, and M239 to F259. R143 serves as a coordination point for a 1,2-diacyl-sn-glycero-3-phospho-(1'-sn-glycerol).

This sequence belongs to the Lgt family.

The protein resides in the cell inner membrane. It catalyses the reaction L-cysteinyl-[prolipoprotein] + a 1,2-diacyl-sn-glycero-3-phospho-(1'-sn-glycerol) = an S-1,2-diacyl-sn-glyceryl-L-cysteinyl-[prolipoprotein] + sn-glycerol 1-phosphate + H(+). It participates in protein modification; lipoprotein biosynthesis (diacylglyceryl transfer). Catalyzes the transfer of the diacylglyceryl group from phosphatidylglycerol to the sulfhydryl group of the N-terminal cysteine of a prolipoprotein, the first step in the formation of mature lipoproteins. The chain is Phosphatidylglycerol--prolipoprotein diacylglyceryl transferase from Aliivibrio fischeri (strain MJ11) (Vibrio fischeri).